The chain runs to 596 residues: Pumilio homolog 12 (596 aa).

The region spanning 254-596 (LNEDLTMSLN…KVLSALSSKK (343 aa)) is the PUM-HD domain. Pumilio repeat units lie at residues 277 to 312 (EARG…MIFN), 313 to 348 (EIID…QIVH), 349 to 388 (SITR…IIIS), 389 to 424 (ALKH…FLFE), 425 to 460 (AAIT…HLVS), 461 to 496 (EIAS…EILE), 497 to 532 (QLEG…RIIR), and 533 to 570 (ELIN…LLVD).

The protein localises to the cytoplasm. Its subcellular location is the nucleus. Functionally, sequence-specific RNA-binding protein that regulates translation and mRNA stability by binding the 3'-UTR of target mRNAs. The polypeptide is Pumilio homolog 12 (APUM12) (Arabidopsis thaliana (Mouse-ear cress)).